A 521-amino-acid polypeptide reads, in one-letter code: MRIWILIFFSFIKLVSSLQYTGNGVLALDFVAKTFPNQENQLEKRDYTYSPSGITSFPLDLQSYTYYTTTLSIGRPSISYTVAIDLDMPYTWLTYYNVMAFNPAYLGIVNSGTQWSTDELRYFLCKKESDSCYFGNASSSFHFVTSPSTFFIRYDDNITVAGINVQDSLSYSHYQALPDFQFGITLKEYVPSSMLPYKGVLGLAASTEINSIDYSDSISSFSPPTFLEQLVKEDILAYPAFSMYLDNQGNGSLLLGAVDTSKYQGQFVALKQTKLTHYAVSIYSVQFLNSTFFSNYSIITDAYFQTRETYIYLPAELAYSVMDNAGAYLSEGYFALNCDEIDLEAALIFQFGCNSTIKVPISLLVIGQVSNICLLGIRPSTDSEIVLGLLFFRNAYTFYHQSQKMIAIGQAFYNATSNLSAIVDQHIPGALTCSQYPTSVASTQLVQTSHFTSTSLSAVNISESVVYSYTSSSSMPSSAIPSFNISLISQNAVANAGNSFSPLSAMVIMMMSAVFLGLGII.

The N-terminal stretch at Met-1–Ser-17 is a signal peptide. The Extracellular portion of the chain corresponds to Leu-18 to Phe-500. In terms of domain architecture, Peptidase A1 spans Tyr-67 to Gly-409. Asp-85 is an active-site residue. Asn-136, Asn-157, Asn-250, Asn-289, Asn-295, Asn-354, Asn-414, Asn-418, Asn-460, and Asn-484 each carry an N-linked (GlcNAc...) asparagine glycan. Residues Ser-501–Ile-521 traverse the membrane as a helical segment.

Belongs to the peptidase A1 family.

Its subcellular location is the endoplasmic reticulum membrane. It localises to the secreted. The protein resides in the cell wall. Functionally, cleaves at paired basic residues. The sequence is that of Aspartic proteinase yapsin-1 (yps1) from Schizosaccharomyces pombe (strain 972 / ATCC 24843) (Fission yeast).